A 107-amino-acid polypeptide reads, in one-letter code: Thioredoxin (107 aa).

The Thioredoxin domain maps to 2–107; the sequence is DSIVHVTDDS…QLTAFLDSNX (106 aa). Cys-32 and Cys-35 are joined by a disulfide.

The protein belongs to the thioredoxin family.

Functionally, participates in various redox reactions through the reversible oxidation of its active center dithiol to a disulfide and catalyzes dithiol-disulfide exchange reactions. This Allochromatium vinosum (Chromatium vinosum) protein is Thioredoxin (trxA).